The sequence spans 383 residues: MTKPLRIGIVAGELSGDTLGEGFIKSVKAQYPNAEFVGIGGPKMIAQGCESLFDMEELAVMGLVEVLGRLPRLLKVKAELVRYFSQNPPDVFIGIDAPDFNLRLEKTLKDSGIKTVHYVSPSVWAWRPKRIFKIDAATDLVLAFLPFEKVFYDKYNVACEFIGHTLADAIPMQSDKIAARKLLGLELDRQWLAVLPGSRGGEVALIAKPFIETCQRIHQKHPNMGFVVAAVNEKRREQFEVIWKETAPELKFIIIQDTARNVMTAADSVLLASGTVALECMLIKRPMVVGYQVNKLTGWIAQKLSITEFVSLPNVLAGKELVQEFIQEECHPDFLYPAMEKVLSQDNSELIDRFTEMHQWIKKDADKQAANAVLRLINKETAE.

It belongs to the LpxB family.

The catalysed reaction is a lipid X + a UDP-2-N,3-O-bis[(3R)-3-hydroxyacyl]-alpha-D-glucosamine = a lipid A disaccharide + UDP + H(+). Its pathway is bacterial outer membrane biogenesis; LPS lipid A biosynthesis. Its function is as follows. Condensation of UDP-2,3-diacylglucosamine and 2,3-diacylglucosamine-1-phosphate to form lipid A disaccharide, a precursor of lipid A, a phosphorylated glycolipid that anchors the lipopolysaccharide to the outer membrane of the cell. The sequence is that of Lipid-A-disaccharide synthase from Aliivibrio salmonicida (strain LFI1238) (Vibrio salmonicida (strain LFI1238)).